The sequence spans 666 residues: DNA mismatch repair protein MutL (666 aa).

The protein belongs to the DNA mismatch repair MutL/HexB family.

Functionally, this protein is involved in the repair of mismatches in DNA. It is required for dam-dependent methyl-directed DNA mismatch repair. May act as a 'molecular matchmaker', a protein that promotes the formation of a stable complex between two or more DNA-binding proteins in an ATP-dependent manner without itself being part of a final effector complex. The chain is DNA mismatch repair protein MutL from Clostridium botulinum (strain 657 / Type Ba4).